Consider the following 511-residue polypeptide: Maturase K (511 aa).

It belongs to the intron maturase 2 family. MatK subfamily.

It is found in the plastid. Its subcellular location is the chloroplast. Usually encoded in the trnK tRNA gene intron. Probably assists in splicing its own and other chloroplast group II introns. This Primula veris (Cowslip) protein is Maturase K.